Consider the following 82-residue polypeptide: ATP synthase subunit c (82 aa).

2 helical membrane-spanning segments follow: residues 7-27 and 57-77; these read AASVVAAGLAVGLGAIGPGIG and FAFMESLTIYGLVVALVLLFA.

This sequence belongs to the ATPase C chain family. F-type ATPases have 2 components, F(1) - the catalytic core - and F(0) - the membrane proton channel. F(1) has five subunits: alpha(3), beta(3), gamma(1), delta(1), epsilon(1). F(0) has four main subunits: a(1), b(1), b'(1) and c(10-14). The alpha and beta chains form an alternating ring which encloses part of the gamma chain. F(1) is attached to F(0) by a central stalk formed by the gamma and epsilon chains, while a peripheral stalk is formed by the delta, b and b' chains.

Its subcellular location is the cellular thylakoid membrane. In terms of biological role, f(1)F(0) ATP synthase produces ATP from ADP in the presence of a proton or sodium gradient. F-type ATPases consist of two structural domains, F(1) containing the extramembraneous catalytic core and F(0) containing the membrane proton channel, linked together by a central stalk and a peripheral stalk. During catalysis, ATP synthesis in the catalytic domain of F(1) is coupled via a rotary mechanism of the central stalk subunits to proton translocation. Functionally, key component of the F(0) channel; it plays a direct role in translocation across the membrane. A homomeric c-ring of between 10-14 subunits forms the central stalk rotor element with the F(1) delta and epsilon subunits. This chain is ATP synthase subunit c, found in Prochlorococcus marinus (strain MIT 9303).